The sequence spans 409 residues: Phosphoglycerate kinase (409 aa).

Substrate contacts are provided by residues 22–24 (DLN), Arg37, 60–63 (HLSR), Arg122, and Arg164. Residues Lys215, Glu338, and 365–368 (GGDS) contribute to the ATP site.

The protein belongs to the phosphoglycerate kinase family. In terms of assembly, monomer.

It localises to the cytoplasm. It carries out the reaction (2R)-3-phosphoglycerate + ATP = (2R)-3-phospho-glyceroyl phosphate + ADP. Its pathway is carbohydrate degradation; glycolysis; pyruvate from D-glyceraldehyde 3-phosphate: step 2/5. This Mycoplasma pneumoniae (strain ATCC 29342 / M129 / Subtype 1) (Mycoplasmoides pneumoniae) protein is Phosphoglycerate kinase (pgk).